Here is a 278-residue protein sequence, read N- to C-terminus: Inositol oxygenase (278 aa).

Substrate is bound by residues arginine 22 and 78-80 (DES). Fe cation-binding residues include histidine 91, histidine 116, and aspartate 117. Substrate-binding positions include lysine 120 and 134–135 (GD). 3 residues coordinate Fe cation: histidine 187, histidine 213, and aspartate 246. Residue 213–214 (HS) participates in substrate binding.

Belongs to the myo-inositol oxygenase family. It depends on Fe cation as a cofactor.

The protein resides in the cytoplasm. It catalyses the reaction myo-inositol + O2 = D-glucuronate + H2O + H(+). It functions in the pathway polyol metabolism; myo-inositol degradation into D-glucuronate; D-glucuronate from myo-inositol: step 1/1. The sequence is that of Inositol oxygenase (miox) from Danio rerio (Zebrafish).